We begin with the raw amino-acid sequence, 326 residues long: Ras association domain-containing protein 2 (326 aa).

The disordered stretch occupies residues 111–133 (EVDAPPEGDQMPSSTDSRGLKPL). Positions 176–264 (YNHKTSVFTP…SKVFLMEKDQ (89 aa)) constitute a Ras-associating domain. The SARAH domain occupies 272 to 319 (VAQYIKFEMPVLKSFIQKLQEEEDREVKKLMRKYTVLRLMIRQRLEEI).

As to quaternary structure, interacts directly with activated KRAS in a GTP-dependent manner. Interacts (via SARAH domain) with STK3/MST2 and STK4/MST1. In terms of processing, phosphorylated by STK3/MST2 and STK4/MST1. As to expression, widely expressed with highest levels in brain, placenta, peripheral blood and lung. Frequently down-regulated in lung tumor cell lines.

It localises to the nucleus. Its subcellular location is the cytoplasm. The protein resides in the chromosome. The protein localises to the centromere. It is found in the kinetochore. In terms of biological role, potential tumor suppressor. Acts as a KRAS-specific effector protein. May promote apoptosis and cell cycle arrest. Stabilizes STK3/MST2 by protecting it from proteasomal degradation. This is Ras association domain-containing protein 2 (RASSF2) from Homo sapiens (Human).